The chain runs to 260 residues: Pyridoxine 5'-phosphate synthase (260 aa).

Residues Asn7 and Arg18 each coordinate 3-amino-2-oxopropyl phosphate. The active-site Proton acceptor is the His43. Arg45 and His50 together coordinate 1-deoxy-D-xylulose 5-phosphate. The active-site Proton acceptor is Glu83. Thr113 is a binding site for 1-deoxy-D-xylulose 5-phosphate. The Proton donor role is filled by His208. Residues Asp209 and 230–231 (GH) contribute to the 3-amino-2-oxopropyl phosphate site.

This sequence belongs to the PNP synthase family. In terms of assembly, homooctamer; tetramer of dimers.

It localises to the cytoplasm. The catalysed reaction is 3-amino-2-oxopropyl phosphate + 1-deoxy-D-xylulose 5-phosphate = pyridoxine 5'-phosphate + phosphate + 2 H2O + H(+). The protein operates within cofactor biosynthesis; pyridoxine 5'-phosphate biosynthesis; pyridoxine 5'-phosphate from D-erythrose 4-phosphate: step 5/5. In terms of biological role, catalyzes the complicated ring closure reaction between the two acyclic compounds 1-deoxy-D-xylulose-5-phosphate (DXP) and 3-amino-2-oxopropyl phosphate (1-amino-acetone-3-phosphate or AAP) to form pyridoxine 5'-phosphate (PNP) and inorganic phosphate. The protein is Pyridoxine 5'-phosphate synthase of Leptospira biflexa serovar Patoc (strain Patoc 1 / Ames).